An 83-amino-acid chain; its full sequence is Cytochrome b559 subunit alpha (83 aa).

The helical transmembrane segment at 21 to 35 (VIHSITVPSLFIAGW) threads the bilayer. Residue H23 participates in heme binding.

The protein belongs to the PsbE/PsbF family. In terms of assembly, heterodimer of an alpha subunit and a beta subunit. PSII is composed of 1 copy each of membrane proteins PsbA, PsbB, PsbC, PsbD, PsbE, PsbF, PsbH, PsbI, PsbJ, PsbK, PsbL, PsbM, PsbT, PsbX, PsbY, PsbZ, Psb30/Ycf12, at least 3 peripheral proteins of the oxygen-evolving complex and a large number of cofactors. It forms dimeric complexes. Heme b is required as a cofactor.

The protein resides in the plastid. It is found in the chloroplast thylakoid membrane. Its function is as follows. This b-type cytochrome is tightly associated with the reaction center of photosystem II (PSII). PSII is a light-driven water:plastoquinone oxidoreductase that uses light energy to abstract electrons from H(2)O, generating O(2) and a proton gradient subsequently used for ATP formation. It consists of a core antenna complex that captures photons, and an electron transfer chain that converts photonic excitation into a charge separation. The sequence is that of Cytochrome b559 subunit alpha from Oltmannsiellopsis viridis (Marine flagellate).